Here is a 718-residue protein sequence, read N- to C-terminus: Probable GTP diphosphokinase RSH2, chloroplastic (718 aa).

The N-terminal 68 residues, 1 to 68, are a transit peptide targeting the chloroplast; it reads MSVPAIAVYT…LFSSPTAAPR (68 aa). Residues 9–48 are disordered; sequence YTSPPGAVYTSSSSSELEASSRGSAPCATAAPPSPASSHR. The segment covering 19–39 has biased composition (low complexity); the sequence is SSSSSELEASSRGSAPCATAA. The HD domain occupies 243–347; that stretch reads YLQHCVETAV…IKLADRLHNM (105 aa).

Belongs to the RelA/SpoT family.

Its subcellular location is the plastid. The protein resides in the chloroplast. It carries out the reaction GTP + ATP = guanosine 3'-diphosphate 5'-triphosphate + AMP. Probable ppGpp (guanosine 3'-diphosphate 5'-diphosphate) synthetase that may be involved in a rapid plant ppGpp-mediated response to pathogens and other stresses. The sequence is that of Probable GTP diphosphokinase RSH2, chloroplastic (RSH2) from Oryza sativa subsp. japonica (Rice).